The sequence spans 218 residues: Ribonuclease HII (218 aa).

Residues valine 22–serine 211 enclose the RNase H type-2 domain. Positions 28, 29, and 119 each coordinate a divalent metal cation.

The protein belongs to the RNase HII family. It depends on Mn(2+) as a cofactor. The cofactor is Mg(2+).

The protein localises to the cytoplasm. The catalysed reaction is Endonucleolytic cleavage to 5'-phosphomonoester.. Its function is as follows. Endonuclease that specifically degrades the RNA of RNA-DNA hybrids. The polypeptide is Ribonuclease HII (Maricaulis maris (strain MCS10) (Caulobacter maris)).